We begin with the raw amino-acid sequence, 104 residues long: Large ribosomal subunit protein uL24 (104 aa).

The protein belongs to the universal ribosomal protein uL24 family. As to quaternary structure, part of the 50S ribosomal subunit.

Its function is as follows. One of two assembly initiator proteins, it binds directly to the 5'-end of the 23S rRNA, where it nucleates assembly of the 50S subunit. In terms of biological role, one of the proteins that surrounds the polypeptide exit tunnel on the outside of the subunit. The chain is Large ribosomal subunit protein uL24 from Hydrogenovibrio crunogenus (strain DSM 25203 / XCL-2) (Thiomicrospira crunogena).